The primary structure comprises 400 residues: Enoyl-[acyl-carrier-protein] reductase [NADH] (400 aa).

Residues 48–53 (GASTGY), 74–75 (FE), 111–112 (DA), and 139–140 (LA) contribute to the NAD(+) site. A substrate-binding site is contributed by Y225. Y235 serves as the catalytic Proton donor. Residues K244 and 273 to 275 (VVT) contribute to the NAD(+) site.

Belongs to the TER reductase family. Monomer.

It carries out the reaction a 2,3-saturated acyl-[ACP] + NAD(+) = a (2E)-enoyl-[ACP] + NADH + H(+). It functions in the pathway lipid metabolism; fatty acid biosynthesis. Functionally, involved in the final reduction of the elongation cycle of fatty acid synthesis (FAS II). Catalyzes the reduction of a carbon-carbon double bond in an enoyl moiety that is covalently linked to an acyl carrier protein (ACP). In Burkholderia multivorans (strain ATCC 17616 / 249), this protein is Enoyl-[acyl-carrier-protein] reductase [NADH].